The primary structure comprises 425 residues: Trigger factor (425 aa).

The 74-residue stretch at 158–231 (GDLVRVNMEV…VEEVYKRTLP (74 aa)) folds into the PPIase FKBP-type domain.

Belongs to the FKBP-type PPIase family. Tig subfamily.

It localises to the cytoplasm. It catalyses the reaction [protein]-peptidylproline (omega=180) = [protein]-peptidylproline (omega=0). Involved in protein export. Acts as a chaperone by maintaining the newly synthesized protein in an open conformation. Functions as a peptidyl-prolyl cis-trans isomerase. In Thermotoga maritima (strain ATCC 43589 / DSM 3109 / JCM 10099 / NBRC 100826 / MSB8), this protein is Trigger factor (tig).